The chain runs to 124 residues: uncharacterized protein (124 aa).

A helical transmembrane segment spans residues 13 to 33 (IIFMALYFVITGIVIRLIGYS).

Its subcellular location is the membrane. This is an uncharacterized protein from Bacillus anthracis.